Consider the following 658-residue polypeptide: Outer dynein arm-docking complex subunit 1 (658 aa).

3 coiled-coil regions span residues 11 to 156, 186 to 234, and 303 to 380; these read KEVH…RYLN, REEA…KNDE, and NFIN…TDIQ. Disordered regions lie at residues 496 to 552 and 574 to 658; these read DEEE…SVSH and GAPV…RGYN. 4 positions are modified to phosphoserine: Ser-500, Ser-506, Ser-507, and Ser-509. Low complexity-rich tracts occupy residues 506-519, 574-583, 592-604, and 621-639; these read SSPSLTLSSPQISL, GAPVSSRSSQ, TSSSSYLGSTGYL, and SMGSELSRGLSSSSGHASS.

It belongs to the ODA1/DCC2 family. As to quaternary structure, component of the outer dynein arm-docking complex along with ODAD2, ODAD3, ODAD4 and CLXN. Interacts with ODAD3. Interacts with ODAD4; this interaction may facilitate the recruitment and/or attachment of outer dynein arm docking complex proteins including ODAD1, ODAD3, and ODAD4 to ciliary axonemes. Interacts with DNAH9. Interacts with MNS1. Interacts with PIERCE1 and PIERCE2; the interactions link the outer dynein arms docking complex (ODA-DC) to the internal microtubule inner proteins (MIP) in cilium axoneme. Expressed in motile ciliated tissues.

It is found in the cytoplasm. It localises to the cytoskeleton. Its subcellular location is the cilium axoneme. In terms of biological role, component of the outer dynein arm-docking complex that mediates outer dynein arms (ODA) binding onto the doublet microtubule. Involved in mediating assembly of both ODAs and their axonemal docking complex onto ciliary microtubules. The sequence is that of Outer dynein arm-docking complex subunit 1 (Odad1) from Mus musculus (Mouse).